A 116-amino-acid polypeptide reads, in one-letter code: CDKN2AIP N-terminal-like protein (116 aa).

N-acetylmethionine is present on Met1. One can recognise an XRN2-binding (XTBD) domain in the interval 24-116; sequence AEQFRSYSES…RSELMKKHQS (93 aa).

Belongs to the CARF family. Interacts with XRN2; the interaction is direct.

This chain is CDKN2AIP N-terminal-like protein (CDKN2AIPNL), found in Homo sapiens (Human).